A 353-amino-acid polypeptide reads, in one-letter code: Chorismate synthase (353 aa).

Residues R48 and R54 each coordinate NADP(+). FMN contacts are provided by residues 125–127 (RSS), 238–239 (NA), G278, 293–297 (KPTSS), and R319.

The protein belongs to the chorismate synthase family. Homotetramer. Requires FMNH2 as cofactor.

The enzyme catalyses 5-O-(1-carboxyvinyl)-3-phosphoshikimate = chorismate + phosphate. The protein operates within metabolic intermediate biosynthesis; chorismate biosynthesis; chorismate from D-erythrose 4-phosphate and phosphoenolpyruvate: step 7/7. In terms of biological role, catalyzes the anti-1,4-elimination of the C-3 phosphate and the C-6 proR hydrogen from 5-enolpyruvylshikimate-3-phosphate (EPSP) to yield chorismate, which is the branch point compound that serves as the starting substrate for the three terminal pathways of aromatic amino acid biosynthesis. This reaction introduces a second double bond into the aromatic ring system. The protein is Chorismate synthase of Buchnera aphidicola subsp. Schizaphis graminum (strain Sg).